The primary structure comprises 202 residues: ATP-dependent Clp protease proteolytic subunit (202 aa).

Serine 106 acts as the Nucleophile in catalysis. Histidine 131 is a catalytic residue.

The protein belongs to the peptidase S14 family. In terms of assembly, fourteen ClpP subunits assemble into 2 heptameric rings which stack back to back to give a disk-like structure with a central cavity, resembling the structure of eukaryotic proteasomes.

The protein localises to the cytoplasm. The enzyme catalyses Hydrolysis of proteins to small peptides in the presence of ATP and magnesium. alpha-casein is the usual test substrate. In the absence of ATP, only oligopeptides shorter than five residues are hydrolyzed (such as succinyl-Leu-Tyr-|-NHMec, and Leu-Tyr-Leu-|-Tyr-Trp, in which cleavage of the -Tyr-|-Leu- and -Tyr-|-Trp bonds also occurs).. Functionally, cleaves peptides in various proteins in a process that requires ATP hydrolysis. Has a chymotrypsin-like activity. Plays a major role in the degradation of misfolded proteins. In Methylibium petroleiphilum (strain ATCC BAA-1232 / LMG 22953 / PM1), this protein is ATP-dependent Clp protease proteolytic subunit.